A 91-amino-acid chain; its full sequence is uncharacterized protein (91 aa).

This is an uncharacterized protein from Vaccinia virus (strain Copenhagen) (VACV).